A 3843-amino-acid polypeptide reads, in one-letter code: NBPF family member NBPF19 (3843 aa).

Positions 70–130 (MLRNERQFKE…RSLNEHLQAL (61 aa)) form a coiled coil. Olduvai domains lie at 165–257 (ENDN…HIIP), 258–329 (ENES…VDIG), 330–421 (RHRW…PSCP), 424–479 (SREL…LDVD), 480–572 (RIKK…RSKK), 573–665 (ERRR…PSCP), 668–723 (SREL…LDVD), 724–816 (RIKK…RSKK), 817–909 (ERRR…PSCP), 912–967 (SREL…LDVD), 968–1060 (RIKK…RSKK), 1061–1153 (ERRR…PSCP), 1156–1211 (SREL…LDVD), 1212–1304 (RIKK…RSKK), 1305–1397 (ERRR…PSCP), 1400–1455 (SREL…LDVD), 1456–1548 (RIKK…RSKK), 1549–1641 (ERRR…PSCP), 1644–1699 (SREL…LDVD), 1700–1792 (RIKK…RSKK), 1793–1885 (ERRR…PSCP), 1888–1943 (SREL…LDVD), 1944–2036 (RIKK…RSKK), 2037–2129 (ERRR…PSCP), 2132–2187 (SREL…LDVD), 2188–2280 (RIKK…RSKK), 2281–2373 (ERRR…PSCP), 2376–2431 (SREL…LDVD), 2432–2524 (RIKK…RSKK), 2525–2617 (ERRR…PSCP), 2620–2675 (SREL…LDVD), 2676–2768 (RIKK…RSKK), 2769–2861 (ERRR…PSCP), 2864–2919 (SREL…LDVD), 2920–3012 (RIKK…RSKK), 3013–3105 (ERRR…PSCP), 3108–3163 (SREL…LDVD), 3164–3256 (RIKK…RSKK), 3257–3349 (ERRR…PSCP), 3352–3407 (SREL…LDVD), 3408–3500 (RIKK…RSKK), 3501–3593 (ERRR…PSCP), 3596–3651 (SREL…LDVD), 3652–3744 (RIKK…RSKK), and 3745–3843 (ERRR…IFPQ). Disordered regions lie at residues 180–203 (EKVQ…PEDS) and 249–295 (WEDA…EGYS). 2 stretches are compositionally biased toward acidic residues: residues 259–268 (NESDDEEEEE) and 279–291 (ESEE…ESWD). The tract at residues 559–597 (KGKGKKRRGRRSKKERRRGRKEGEEDQNPPCPRLSRELL) is disordered. Residues 560–578 (GKGKKRRGRRSKKERRRGR) show a composition bias toward basic residues. Residues 803–841 (KGKGKKRRGRRSKKERRRGRKEGEEDQNPPCPRLSRELL) are disordered. The segment covering 804-822 (GKGKKRRGRRSKKERRRGR) has biased composition (basic residues). Residues 1047-1085 (KGKGKKRRGRRSKKERRRGRKEGEEDQNPPCPRLSRELL) are disordered. Over residues 1048 to 1066 (GKGKKRRGRRSKKERRRGR) the composition is skewed to basic residues. Positions 1291 to 1329 (KGKGKKRRGRRSKKERRRGRKEGEEDQNPPCPRLSRELL) are disordered. Residues 1292-1310 (GKGKKRRGRRSKKERRRGR) show a composition bias toward basic residues. Residues 1535 to 1573 (KGKGKKRRGRRSKKERRRGRKEGEEDQNPPCPRLSRELL) form a disordered region. A compositionally biased stretch (basic residues) spans 1536 to 1554 (GKGKKRRGRRSKKERRRGR). The tract at residues 1779–1817 (KGKGKKRRGRRSKKERRRGRKEGEEDQNPPCPRLSRELL) is disordered. Residues 1780-1798 (GKGKKRRGRRSKKERRRGR) are compositionally biased toward basic residues. The tract at residues 2023-2061 (KGKGKKRRGRRSKKERRRGRKEGEEDQNPPCPRLSRELL) is disordered. A compositionally biased stretch (basic residues) spans 2024–2042 (GKGKKRRGRRSKKERRRGR). Residues 2267–2305 (KGKGKKRRGRRSKKERRRGRKEGEEDQNPPCPRLSRELL) form a disordered region. Basic residues predominate over residues 2268–2286 (GKGKKRRGRRSKKERRRGR). Residues 2511–2549 (KGKGKKRRGRRSKKERRRGRKEGEEDQNPPCPRLSRELL) form a disordered region. Residues 2512–2530 (GKGKKRRGRRSKKERRRGR) are compositionally biased toward basic residues. Positions 2755 to 2793 (KGKGKKRRGRRSKKERRRGRKEGEEDQNPPCPRLSRELL) are disordered. Residues 2756–2774 (GKGKKRRGRRSKKERRRGR) show a composition bias toward basic residues. Residues 2999 to 3037 (KGKGKKRRGRRSKKERRRGRKEGEEDQNPPCPRLSRELL) are disordered. The segment covering 3000 to 3018 (GKGKKRRGRRSKKERRRGR) has biased composition (basic residues). Positions 3243-3281 (KGKGKKRRGRRSKKERRRGRKEGEEDQNPPCPRLSRELL) are disordered. Residues 3244 to 3262 (GKGKKRRGRRSKKERRRGR) are compositionally biased toward basic residues. The tract at residues 3487–3525 (KGKGKKRRGRRSKKERRRGRKEGEEDQNPPCPRLSRELL) is disordered. Residues 3488 to 3506 (GKGKKRRGRRSKKERRRGR) are compositionally biased toward basic residues. Positions 3731 to 3764 (KGKGKKRRGRRSKKERRRGRKEGEEDQNPPCPRL) are disordered. Over residues 3732–3750 (GKGKKRRGRRSKKERRRGR) the composition is skewed to basic residues.

Belongs to the NBPF family.

It is found in the cytoplasm. The chain is NBPF family member NBPF19 from Homo sapiens (Human).